The chain runs to 391 residues: Histone acetyltransferase type B catalytic subunit (391 aa).

The interval 193–195 (YKH) is interaction with histone H4 N-terminus. Acetyl-CoA-binding positions include 219-221 (FII) and 226-232 (QSKSHGS). Catalysis depends on glutamate 254, which acts as the Proton donor/acceptor. A disordered region spans residues 372–391 (RRVLPSDEENAGESKRHKKE).

It belongs to the HAT1 family. As to quaternary structure, component of the HAT-B complex composed of at least HAT1 and HAT2. The HAT-B complex binds to histone H4 tail.

The protein localises to the cytoplasm. Its subcellular location is the nucleus. It carries out the reaction L-lysyl-[protein] + acetyl-CoA = N(6)-acetyl-L-lysyl-[protein] + CoA + H(+). In terms of biological role, catalytic component of the histone acetylase B (HAT-B) complex. Acetylates 'Lys-12' of histone H4 which is required for telomeric silencing. Has intrinsic substrate specificity that modifies lysine in recognition sequence GXGKXG. Involved in DNA double-strand break repair. This Eremothecium gossypii (strain ATCC 10895 / CBS 109.51 / FGSC 9923 / NRRL Y-1056) (Yeast) protein is Histone acetyltransferase type B catalytic subunit (HAT1).